We begin with the raw amino-acid sequence, 2183 residues long: RNA replication polyprotein (2183 aa).

One can recognise an Alphavirus-like MT domain in the interval 63-256; sequence SPHSYRPHSH…YIQPVAGSYL (194 aa). The Fe2OG dioxygenase domain occupies 762 to 853; sequence FYNQCLVQEY…RISLTFRLTK (92 aa). Residues His-780, Asp-782, and His-835 each contribute to the Fe cation site. Arg-844 contributes to the 2-oxoglutarate binding site. The segment at 883–910 is disordered; that stretch reads ERRSHQSGGRPAVELEGHEREKVNSDSS. Residues 895–906 show a composition bias toward basic and acidic residues; it reads VELEGHEREKVN. Positions 1091–1199 constitute an OTU domain; the sequence is FHSFDVEADG…DNHFKPCMPV (109 aa). Positions 1198 to 1288 constitute a Peptidase C23 domain; the sequence is PVNGCVIRAI…LEKEHLAHIP (91 aa). Active-site residues include Cys-1202 and His-1283. Residues 1349 to 1520 form the (+)RNA virus helicase ATP-binding domain; sequence KEAQKDLASK…SGRSYKFNIL (172 aa). 1374–1381 lines the ATP pocket; that stretch reads GTFGCGKS. The (+)RNA virus helicase C-terminal domain maps to 1521 to 1667; it reads SQRFRNPVFY…TKRACNDDII (147 aa). The RdRp catalytic domain maps to 1961–2068; it reads GVCTESDYEA…NSRLKVTNRF (108 aa).

The protein belongs to the potexviruses/carlaviruses RNA replication protein family. It depends on Fe(2+) as a cofactor. Specific enzymatic cleavages by the viral protease yield mature proteins.

It catalyses the reaction ATP + H2O = ADP + phosphate + H(+). The enzyme catalyses RNA(n) + a ribonucleoside 5'-triphosphate = RNA(n+1) + diphosphate. Its function is as follows. RNA-directed RNA polymerase involved in viral RNA replication. Protease: Thiol protease that cleaves the polyprotein. The polypeptide is RNA replication polyprotein (Apple stem pitting virus (isolate PA66) (ASPV)).